A 571-amino-acid chain; its full sequence is Protein EARLY STARVATION 1, chloroplastic (571 aa).

Disordered regions lie at residues 142 to 162 and 215 to 254; these read RHSS…KDAG and GSYR…TEHD. Residues 145–155 show a composition bias toward low complexity; the sequence is SCSSQSLPQQQ.

It belongs to the ESV1 family.

It localises to the plastid. It is found in the chloroplast stroma. Binds preferentially to highly ordered alpha-glucans, such as starch and crystalline maltodextrins. Involved in the organization of the starch granule matrix, thus influencing starch turnover by modulating the accessibility of starch polymers to modifying and degrading enzymes. Required for the control of starch degradation in leaves and starch distribution in nonphotosynthetic parts. Promotes gravitropic responses, negative in shoots but positive in roots, by facilitating starch granules (statoliths) formation in hypocotyls and roots columella. The polypeptide is Protein EARLY STARVATION 1, chloroplastic (Marchantia polymorpha (Common liverwort)).